A 446-amino-acid polypeptide reads, in one-letter code: Exodeoxyribonuclease 7 large subunit (446 aa).

It belongs to the XseA family. Heterooligomer composed of large and small subunits.

The protein localises to the cytoplasm. The enzyme catalyses Exonucleolytic cleavage in either 5'- to 3'- or 3'- to 5'-direction to yield nucleoside 5'-phosphates.. Functionally, bidirectionally degrades single-stranded DNA into large acid-insoluble oligonucleotides, which are then degraded further into small acid-soluble oligonucleotides. The chain is Exodeoxyribonuclease 7 large subunit from Geotalea uraniireducens (strain Rf4) (Geobacter uraniireducens).